The sequence spans 213 residues: Ribonuclease HII (213 aa).

The RNase H type-2 domain occupies 2 to 213; that stretch reads GRVAGIDEAG…KEWATWKRLR (212 aa). Residues D8, E9, and D113 each contribute to the a divalent metal cation site.

This sequence belongs to the RNase HII family. Mn(2+) is required as a cofactor. The cofactor is Mg(2+).

It localises to the cytoplasm. It catalyses the reaction Endonucleolytic cleavage to 5'-phosphomonoester.. In terms of biological role, endonuclease that specifically degrades the RNA of RNA-DNA hybrids. The sequence is that of Ribonuclease HII from Thermofilum pendens (strain DSM 2475 / Hrk 5).